Here is a 257-residue protein sequence, read N- to C-terminus: Phosphomannomutase (257 aa).

Residue aspartate 19 is the Nucleophile of the active site. Mg(2+) is bound by residues aspartate 19 and aspartate 21. The Proton donor/acceptor role is filled by aspartate 21. Residues arginine 28, arginine 133, arginine 144, arginine 151, serine 189, and aspartate 191 each contribute to the alpha-D-mannose 1-phosphate site. The Mg(2+) site is built by aspartate 219, phenylalanine 231, aspartate 233, and threonine 236.

The protein belongs to the eukaryotic PMM family. In terms of assembly, homodimer.

The protein localises to the cytoplasm. The catalysed reaction is alpha-D-mannose 1-phosphate = D-mannose 6-phosphate. It functions in the pathway nucleotide-sugar biosynthesis; GDP-alpha-D-mannose biosynthesis; alpha-D-mannose 1-phosphate from D-fructose 6-phosphate: step 2/2. Involved in the synthesis of the GDP-mannose and dolichol-phosphate-mannose required for a number of critical mannosyl transfer reactions. In Schizosaccharomyces pombe (strain 972 / ATCC 24843) (Fission yeast), this protein is Phosphomannomutase (pmm1).